A 362-amino-acid polypeptide reads, in one-letter code: Olfactory receptor 5AU1 (362 aa).

Over Met-1–Phe-79 the chain is Extracellular. The N-linked (GlcNAc...) asparagine glycan is linked to Asn-56. A helical membrane pass occupies residues Val-80–Ile-100. The Cytoplasmic segment spans residues His-101–Ser-116. A helical transmembrane segment spans residues Leu-117 to Lys-139. The Extracellular segment spans residues Arg-140–Thr-150. Cys-148 and Cys-230 are disulfide-bonded. A helical membrane pass occupies residues Gln-151 to Tyr-171. At Asp-172–Ser-194 the chain is on the cytoplasmic side. The helical transmembrane segment at Leu-195–Phe-215 threads the bilayer. The Extracellular segment spans residues Ser-216–Glu-247. Residues Ile-248 to Ser-268 traverse the membrane as a helical segment. The Cytoplasmic segment spans residues Tyr-269 to Ser-290. The chain crosses the membrane as a helical span at residues Thr-291–Leu-311. The Extracellular segment spans residues Arg-312–Asp-322. Residues Arg-323–Leu-343 form a helical membrane-spanning segment. Over Arg-344–Glu-362 the chain is Cytoplasmic.

It belongs to the G-protein coupled receptor 1 family.

It is found in the cell membrane. Its function is as follows. Odorant receptor. This is Olfactory receptor 5AU1 (OR5AU1) from Homo sapiens (Human).